A 129-amino-acid polypeptide reads, in one-letter code: Small ribosomal subunit protein uS11 (129 aa).

Belongs to the universal ribosomal protein uS11 family. In terms of assembly, part of the 30S ribosomal subunit. Interacts with proteins S7 and S18. Binds to IF-3.

Located on the platform of the 30S subunit, it bridges several disparate RNA helices of the 16S rRNA. Forms part of the Shine-Dalgarno cleft in the 70S ribosome. The protein is Small ribosomal subunit protein uS11 of Limosilactobacillus reuteri (strain DSM 20016) (Lactobacillus reuteri).